The chain runs to 98 residues: NADH-ubiquinone oxidoreductase chain 4L (98 aa).

3 consecutive transmembrane segments (helical) span residues 1 to 21 (MSMV…GLLM), 29 to 49 (SLLC…VTIL), and 61 to 81 (IILL…LVMV).

It belongs to the complex I subunit 4L family. As to quaternary structure, core subunit of respiratory chain NADH dehydrogenase (Complex I) which is composed of 45 different subunits.

The protein localises to the mitochondrion inner membrane. It catalyses the reaction a ubiquinone + NADH + 5 H(+)(in) = a ubiquinol + NAD(+) + 4 H(+)(out). Functionally, core subunit of the mitochondrial membrane respiratory chain NADH dehydrogenase (Complex I) which catalyzes electron transfer from NADH through the respiratory chain, using ubiquinone as an electron acceptor. Part of the enzyme membrane arm which is embedded in the lipid bilayer and involved in proton translocation. This chain is NADH-ubiquinone oxidoreductase chain 4L (MT-ND4L), found in Eumetopias jubatus (Steller sea lion).